Reading from the N-terminus, the 215-residue chain is RNA pyrophosphohydrolase (215 aa).

The region spanning 6–149 (GFRPNVGIIL…KRDVYQLALT (144 aa)) is the Nudix hydrolase domain. The Nudix box motif lies at 38-59 (GGIKYGETPMQAMYRELHEETG).

This sequence belongs to the Nudix hydrolase family. RppH subfamily. A divalent metal cation is required as a cofactor.

Accelerates the degradation of transcripts by removing pyrophosphate from the 5'-end of triphosphorylated RNA, leading to a more labile monophosphorylated state that can stimulate subsequent ribonuclease cleavage. The protein is RNA pyrophosphohydrolase of Burkholderia lata (strain ATCC 17760 / DSM 23089 / LMG 22485 / NCIMB 9086 / R18194 / 383).